The following is a 99-amino-acid chain: uncharacterized protein (99 aa).

Disordered regions lie at residues 1 to 24 (MKATRRTRVASERGVRRRRRVRAT) and 49 to 99 (SVRT…RCAT). 2 stretches are compositionally biased toward basic residues: residues 15 to 24 (VRRRRRVRAT) and 71 to 81 (SRRRGRPRSSR).

This is an uncharacterized protein from Streptomyces fradiae (Streptomyces roseoflavus).